Consider the following 207-residue polypeptide: Small ribosomal subunit protein uS4 (207 aa).

A disordered region spans residues 31–51; that stretch reads KCKLDSKPGQHGRTSGARTSD. The S4 RNA-binding domain occupies 97–162; that stretch reads SRLDNVVYRM…QGRIRESLDL (66 aa).

Belongs to the universal ribosomal protein uS4 family. In terms of assembly, part of the 30S ribosomal subunit. Contacts protein S5. The interaction surface between S4 and S5 is involved in control of translational fidelity.

Its function is as follows. One of the primary rRNA binding proteins, it binds directly to 16S rRNA where it nucleates assembly of the body of the 30S subunit. In terms of biological role, with S5 and S12 plays an important role in translational accuracy. In Bordetella bronchiseptica (strain ATCC BAA-588 / NCTC 13252 / RB50) (Alcaligenes bronchisepticus), this protein is Small ribosomal subunit protein uS4.